The chain runs to 381 residues: Succinyl-diaminopimelate desuccinylase (381 aa).

Histidine 71 is a binding site for Zn(2+). Aspartate 73 is a catalytic residue. Aspartate 104 contributes to the Zn(2+) binding site. The active-site Proton acceptor is the glutamate 138. Residues glutamate 139, glutamate 167, and histidine 353 each coordinate Zn(2+).

Belongs to the peptidase M20A family. DapE subfamily. In terms of assembly, homodimer. It depends on Zn(2+) as a cofactor. Co(2+) is required as a cofactor.

It carries out the reaction N-succinyl-(2S,6S)-2,6-diaminopimelate + H2O = (2S,6S)-2,6-diaminopimelate + succinate. Its pathway is amino-acid biosynthesis; L-lysine biosynthesis via DAP pathway; LL-2,6-diaminopimelate from (S)-tetrahydrodipicolinate (succinylase route): step 3/3. Catalyzes the hydrolysis of N-succinyl-L,L-diaminopimelic acid (SDAP), forming succinate and LL-2,6-diaminopimelate (DAP), an intermediate involved in the bacterial biosynthesis of lysine and meso-diaminopimelic acid, an essential component of bacterial cell walls. The sequence is that of Succinyl-diaminopimelate desuccinylase from Shewanella pealeana (strain ATCC 700345 / ANG-SQ1).